The chain runs to 81 residues: Albumin-1 (81 aa).

Positions 27-34 (LSSVAKMI) are excised as a propeptide.

In terms of processing, three disulfide bonds are probably present. The C-terminal glycine may be removed from A1b.

Its function is as follows. A1b binds to basic 7S globulin (BG) and stimulates its phosphorylation activity. The sequence is that of Albumin-1 (LEG1) from Lupinus angustifolius (Narrow-leaved blue lupine).